The sequence spans 66 residues: Sec-independent protein translocase protein TatA (66 aa).

Residues 1 to 21 traverse the membrane as a helical segment; that stretch reads MIGGLGMPELIIILVIILIIF. The interval 45-66 is disordered; that stretch reads RDAELNEGDKDDKEKEQEKLDK.

Belongs to the TatA/E family. As to quaternary structure, the Tat system comprises two distinct complexes: a TatABC complex, containing multiple copies of TatA, TatB and TatC subunits, and a separate TatA complex, containing only TatA subunits. Substrates initially bind to the TatABC complex, which probably triggers association of the separate TatA complex to form the active translocon.

It localises to the cell inner membrane. Its function is as follows. Part of the twin-arginine translocation (Tat) system that transports large folded proteins containing a characteristic twin-arginine motif in their signal peptide across membranes. TatA could form the protein-conducting channel of the Tat system. The sequence is that of Sec-independent protein translocase protein TatA from Desulforapulum autotrophicum (strain ATCC 43914 / DSM 3382 / VKM B-1955 / HRM2) (Desulfobacterium autotrophicum).